We begin with the raw amino-acid sequence, 129 residues long: Phosphomevalonate dehydratase small subunit (129 aa).

The active-site Proton acceptor is Ser-61.

Belongs to the AcnX type II small subunit family. As to quaternary structure, heterodimer composed of a large subunit (PMDh-L) and a small subunit (PMDh-S).

It carries out the reaction (R)-5-phosphomevalonate = (2E)-3-methyl-5-phosphooxypent-2-enoate + H2O. It participates in isoprenoid biosynthesis; isopentenyl diphosphate biosynthesis via mevalonate pathway. In terms of biological role, component of a hydro-lyase that catalyzes the dehydration of mevalonate 5-phosphate (MVA5P) to form trans-anhydromevalonate 5-phosphate (tAHMP). Involved in the archaeal mevalonate (MVA) pathway, which provides fundamental precursors for isoprenoid biosynthesis, such as isopentenyl diphosphate (IPP) and dimethylallyl diphosphate (DMAPP). This Methanocaldococcus jannaschii (strain ATCC 43067 / DSM 2661 / JAL-1 / JCM 10045 / NBRC 100440) (Methanococcus jannaschii) protein is Phosphomevalonate dehydratase small subunit.